A 137-amino-acid polypeptide reads, in one-letter code: Interferon-induced transmembrane protein 3 (137 aa).

Residues 1-57 (MNHTSQAFVNAATGGQPPNYERIKEEYEVSELGAPHGSASVRTTVINMPREVSVPDH) are Cytoplasmic-facing. At tyrosine 20 the chain carries Phosphotyrosine. A Glycyl lysine isopeptide (Lys-Gly) (interchain with G-Cter in ubiquitin) cross-link involves residue lysine 24. A Phosphotyrosine modification is found at tyrosine 27. Residues 58–78 (VVWSLFNTLFMNFCCLGFIAY) constitute an intramembrane region (helical). Residues 60-93 (WSLFNTLFMNFCCLGFIAYAYSVKSRDRKMVGDM) form an interaction with SPP1 region. S-palmitoyl cysteine attachment occurs at residues cysteine 71 and cysteine 72. The Cytoplasmic portion of the chain corresponds to 79–109 (AYSVKSRDRKMVGDMTGAQAYASTAKCLNIS). Residues lysine 83, lysine 88, and lysine 104 each participate in a glycyl lysine isopeptide (Lys-Gly) (interchain with G-Cter in ubiquitin) cross-link. Residue cysteine 105 is the site of S-palmitoyl cysteine attachment. The interval 108-133 (ISSLVLSILMVIITIVTVVIIALNAP) is interaction with VAPA. The helical transmembrane segment at 110 to 130 (SLVLSILMVIITIVTVVIIAL) threads the bilayer. The Extracellular segment spans residues 131–137 (NAPRLQT).

This sequence belongs to the CD225/Dispanin family. Interacts with ATP6V0B. Interacts with CD81. Interacts with SPP1; the interaction reduces OPN expression. Interacts with BRI3. In terms of processing, polyubiquitinated with both 'Lys-48' and 'Lys-63' linkages. Ubiquitination negatively regulates antiviral activity. Lys-24 is the most prevalent ubiquitination site. Post-translationally, phosphorylation at Tyr-20 is required for endosomal and lysosomal location.

The protein localises to the cell membrane. The protein resides in the late endosome membrane. It is found in the early endosome membrane. Its subcellular location is the lysosome membrane. It localises to the cytoplasm. The protein localises to the perinuclear region. In terms of biological role, IFN-induced antiviral protein which disrupts intracellular cholesterol homeostasis. Inhibits the entry of viruses to the host cell cytoplasm by preventing viral fusion with cholesterol depleted endosomes. May inactivate new enveloped viruses which buds out of the infected cell, by letting them go out with a cholesterol depleted membrane. Active against multiple viruses. Plays a critical role in the structural stability and function of vacuolar ATPase (v-ATPase). Establishes physical contact with the v-ATPase of endosomes which is critical for proper clathrin localization and is also required for the function of the v-ATPase to lower the pH in phagocytic endosomes thus establishing an antiviral state. The protein is Interferon-induced transmembrane protein 3 of Rattus norvegicus (Rat).